We begin with the raw amino-acid sequence, 27 residues long: Chitinase 47 kDa (27 aa).

Residues 3 to 27 (SKVVGYFTEWGTYDRKYYVKNIEXS) form the GH18 domain.

Belongs to the glycosyl hydrolase 18 family. Chitinase class II subfamily. Homodimer.

It catalyses the reaction Random endo-hydrolysis of N-acetyl-beta-D-glucosaminide (1-&gt;4)-beta-linkages in chitin and chitodextrins.. Able to cleave chitin oligomers from N=3 to 6. The polypeptide is Chitinase 47 kDa (Streptomyces olivaceoviridis (Streptomyces corchorusii)).